Consider the following 556-residue polypeptide: Phenylalanine--tRNA ligase beta subunit (556 aa).

Residues 278-353 form the B5 domain; that stretch reads LTPKRFEVEL…IAYGYNNIEP (76 aa). D331, D337, E340, and D341 together coordinate Mg(2+).

The protein belongs to the phenylalanyl-tRNA synthetase beta subunit family. Type 2 subfamily. In terms of assembly, tetramer of two alpha and two beta subunits. The cofactor is Mg(2+).

The protein localises to the cytoplasm. It catalyses the reaction tRNA(Phe) + L-phenylalanine + ATP = L-phenylalanyl-tRNA(Phe) + AMP + diphosphate + H(+). This chain is Phenylalanine--tRNA ligase beta subunit, found in Pyrococcus abyssi (strain GE5 / Orsay).